Reading from the N-terminus, the 221-residue chain is Uracil-DNA glycosylase 1 (221 aa).

Asp-61 (proton acceptor) is an active-site residue.

This sequence belongs to the uracil-DNA glycosylase (UDG) superfamily. UNG family.

Its subcellular location is the cytoplasm. It carries out the reaction Hydrolyzes single-stranded DNA or mismatched double-stranded DNA and polynucleotides, releasing free uracil.. Excises uracil residues from the DNA which can arise as a result of misincorporation of dUMP residues by DNA polymerase or due to deamination of cytosine. This is Uracil-DNA glycosylase 1 from Listeria innocua serovar 6a (strain ATCC BAA-680 / CLIP 11262).